A 463-amino-acid chain; its full sequence is Sodium-coupled neutral amino acid transporter 7 (463 aa).

S28 bears the Phosphoserine mark. 11 helical membrane-spanning segments follow: residues 56 to 76 (AVFIVVNACLGAGLLNFPAAF), 82 to 102 (VAAGIALQMGMLVFIISGLVI), 130 to 150 (LCEIAIAVYTFGTCIAFLIII), 179 to 199 (FTISLTAFLFILPLSIPKEIG), 206 to 226 (SLSVVGTWYVTAIVIIKYIWP), 240 to 260 (ASWMAVFNAMPTICFGFQCHV), 283 to 303 (AAMVIALAVYMGTGICGFLTF), 320 to 340 (VAVAVARAFIILSVLTSYPIL), 372 to 392 (VLQTLVWFLLTLLLALFIPDI), 396 to 416 (ISVIGGLAACFIFIFPGLCLI), and 429 to 449 (ASWWALVSYGVLLVTLGAFIF).

Belongs to the amino acid/polyamine transporter 2 family. In terms of assembly, interacts with the mTORC1 complex; this interaction mediates the recruitment of mTORC1 to the lysosome and its subsequent activation.

It localises to the lysosome membrane. The protein localises to the cell projection. It is found in the axon. The enzyme catalyses L-asparagine(in) + Na(+)(in) = L-asparagine(out) + Na(+)(out). The catalysed reaction is L-glutamine(in) + Na(+)(in) = L-glutamine(out) + Na(+)(out). In terms of biological role, symporter that selectively cotransports sodium ions and amino acids, such as L-glutamine and L-asparagine from the lysosome into the cytoplasm and may participates in mTORC1 activation. The transport activity requires an acidic lysosomal lumen. This is Sodium-coupled neutral amino acid transporter 7 from Rattus norvegicus (Rat).